Here is a 361-residue protein sequence, read N- to C-terminus: MGSATNTPQINSDEEENFLFAMQLASASVLPMVLKSAIELDLLELIKKSGAGAFVSPVDLAAQLPTTNPDAHVMLDRILRLLTSYAILECRLKTLPDGGVERLYGLAPVCKFLTKNEDGVSMAPLTLMNQDKVLMESWYHLSDAVVDGGIPFNKAYGMTAFEYHGTDPRFNKVFNQGMSNHSTITMKKILETYTGFDGLKTVVDVGGGTGATLNMIVSKYPSIKGINFDLPHVIEDAPSYPGVEHVGGDMFVSVPKGDAIFMKWICHDWSDEHCVKFLKNCYDALPQNGKVILAECVLPEAPDTGLATKNVVHIDVIMLAHNPGGKERTEKEFQGLAKAAGFKQFNKACCAYNTWIMELLK.

128 to 134 (MNQDKVL) is a substrate binding site. Positions 160 to 178 (AFEYHGTDPRFNKVFNQGM) are substrate binding. The S-adenosyl-L-methionine site is built by G206, D229, D249, M250, and K263. H267 functions as the Proton acceptor in the catalytic mechanism.

The protein belongs to the class I-like SAM-binding methyltransferase superfamily. Cation-independent O-methyltransferase family. COMT subfamily. Homodimer.

It catalyses the reaction (E)-caffeate + S-adenosyl-L-methionine = (E)-ferulate + S-adenosyl-L-homocysteine + H(+). It participates in aromatic compound metabolism; phenylpropanoid biosynthesis. Catalyzes the conversion of caffeic acid to ferulic acid and of 5-hydroxyferulic acid to sinapic acid. The resulting products may subsequently be converted to the corresponding alcohols that are incorporated into lignins. The protein is Caffeic acid 3-O-methyltransferase 1 (COMT1) of Ocimum basilicum (Sweet basil).